Reading from the N-terminus, the 625-residue chain is Threonine--tRNA ligase (625 aa).

Residues methionine 1–glutamate 147 form an editing domain region. The catalytic stretch occupies residues proline 206 to proline 505. Residues cysteine 298, histidine 350, and histidine 474 each coordinate Zn(2+).

Belongs to the class-II aminoacyl-tRNA synthetase family. Homodimer. The cofactor is Zn(2+).

Its subcellular location is the cytoplasm. The catalysed reaction is tRNA(Thr) + L-threonine + ATP = L-threonyl-tRNA(Thr) + AMP + diphosphate + H(+). Catalyzes the attachment of threonine to tRNA(Thr) in a two-step reaction: L-threonine is first activated by ATP to form Thr-AMP and then transferred to the acceptor end of tRNA(Thr). Also edits incorrectly charged L-seryl-tRNA(Thr). This chain is Threonine--tRNA ligase, found in Pyrococcus furiosus (strain ATCC 43587 / DSM 3638 / JCM 8422 / Vc1).